The following is a 733-amino-acid chain: Nuclear hormone receptor family member nhr-66 (733 aa).

2 stretches are compositionally biased toward low complexity: residues 113-130 (PAIP…SQAS) and 165-185 (QQNR…QQQN). Residues 113–190 (PAIPSSSSCS…AQQQNSMARK (78 aa)) are disordered. The segment at residues 266–343 (VPACAICGTD…SGMDKNSVQH (78 aa)) is a DNA-binding region (nuclear receptor). 2 NR C4-type zinc fingers span residues 269 to 289 (CAIC…CAAC) and 305 to 326 (CNKG…CRAC). The segment at 361-396 (PDAEFEPSAKVSTVSEPSTSSGPSGGFNQNVSSPAG) is disordered. Positions 371–382 (VSTVSEPSTSSG) are enriched in low complexity. Positions 444 to 687 (CLGDWFRKPS…ACFNQMLDVE (244 aa)) constitute an NR LBD domain. Residues 676–687 (ADACFNQMLDVE) are AF-2. Residues 691 to 733 (VSPDGQKDSEAEQGPSPVSVPEAARGSYQDDDMPPVLEKNCDL) form a disordered region.

Belongs to the nuclear hormone receptor family. Interacts with nuclear hormone receptor nhr-49; the interaction is direct. Widely expressed, including in hypodermis, gut, muscle, and neuronal cells of the ventral nerve cord, head, and tail ganglia. Expressed in the head ganglion in several sensory and interneurons, including AVA.

The protein resides in the nucleus. Transcription factor. Binds to regulatory elements and regulates transcription of target genes, including the potassium channel accessory subunit mps-2. Negatively regulates transcription of mps-2, thereby modulating age-dependent memory decline. In concert with nuclear hormone receptor nhr-49, involved in regulating target genes with roles in sphingolipid breakdown and lipid remodeling. Plays a role in modulating mitochondrial morphology and function. The polypeptide is Nuclear hormone receptor family member nhr-66 (Caenorhabditis elegans).